The following is a 339-amino-acid chain: Meiotic recombination protein rec7 (339 aa).

Its function is as follows. May be involved primarily in the early steps of meiotic recombination. The chain is Meiotic recombination protein rec7 (rec7) from Schizosaccharomyces pombe (strain 972 / ATCC 24843) (Fission yeast).